The primary structure comprises 564 residues: MESLALLPTLSLSTTTTTSKATAFLRSSTTSLHHRRPHLSLSLSSTPKPTLTFSSHSHSHSLSSKPLLALKPLNATASSSSSPATTSPPPTKSGAKLIPLILSVSVGLLLRFAVPKPAELTPQAWQLLAIFLSTVAGLVLSPLPVGAWAFLGVTASVVTKTLPFPTAFCAFTNEVIWLIVISFFFARGFVKTGLGDRIATYFVKWLGKSTLGLSYGLTISEALVAPAMPSTTARAGGIFLPIIKSLSISSGSLPGGESRKKLGTYLIMTQFQSAGNSSALFLTAAAQNLLCLKLAEELGVKIASPWVFWLKAASLPAFVALLLTPLILYKLYPPELKDTPEAPALAAEKLKNMGPVTKNEWVMVGTMLLAVSLWVFGEKIGVSSVVAAMLGLSVLLLLGVLDWNDCLNEKSAWDTLAWFAVLVGMASQLTNLGIVSWMSGCVARSLKTMNLSWPAAFGILQAAYFFVHYLFASQTGHVGALYSAFLAMNIASGVPGVLAALALAYNTNLFGALTHYSSGQAAVYYGAGYVDLPDVFKMGFIMAVINATIWTVVGGVWWKILGIY.

Residues 1–22 (MESLALLPTLSLSTTTTTSKAT) constitute a chloroplast transit peptide. Residues 35-58 (RRPHLSLSLSSTPKPTLTFSSHSH) form a disordered region. The segment covering 39-58 (LSLSLSSTPKPTLTFSSHSH) has biased composition (low complexity). The next 12 membrane-spanning stretches (helical) occupy residues 94-114 (GAKL…RFAV), 127-147 (LLAI…PVGA), 166-186 (TAFC…FFFA), 235-255 (AGGI…SLPG), 262-282 (LGTY…ALFL), 307-327 (VFWL…TPLI), 356-376 (VTKN…LWVF), 380-400 (IGVS…LLGV), 415-435 (TLAW…LGIV), 451-471 (LSWP…HYLF), 484-504 (AFLA…LALA), and 538-558 (MGFI…GVWW).

It belongs to the SLC13A/DASS transporter (TC 2.A.47) family. DIT1 subfamily. Expressed in leaves.

The protein resides in the plastid. The protein localises to the chloroplast inner membrane. Its function is as follows. Glutamate/malate translocator involved with DIT1 in primary ammonia assimilation and in the re-assimilation of ammonia generated by the photorespiratory pathway. Exports the end product of ammonia assimilation, glutamate, from plastids to the cytosol. The precursor for ammonia assimilation, 2-oxoglutarate, is imported from the cytosol by DIT1. The sequence is that of Dicarboxylate transporter 2, chloroplastic (DIT2) from Spinacia oleracea (Spinach).